The sequence spans 1574 residues: Sterol 3-beta-glucosyltransferase (1574 aa).

Residues 37 to 48 show a composition bias toward polar residues; it reads TFLNQNPASPNN. Disordered stretches follow at residues 37–61 and 102–170; these read TFLN…NKDE and ASNA…HSKL. 2 stretches are compositionally biased toward basic and acidic residues: residues 107–121 and 128–138; these read EAKD…RSSR and PEYRREYKLDY. A compositionally biased stretch (acidic residues) spans 139 to 148; the sequence is DIDESEEDDI. The segment covering 149 to 170 has biased composition (basic and acidic residues); sequence ESTRDENTLKPKTEDTSVHSKL. Residues 253 to 288 enclose the GRAM 1 domain; sequence DKLKRVFELNDDDYFYGNYNVWLVRDVLLQGHIYLT. The PH domain maps to 323–471; the sequence is DVIQSGSLGM…WVNNIVKVVF (149 aa). Disordered stretches follow at residues 389–413, 538–559, 651–722, and 774–806; these read GRND…SGDE, RMKK…GNEP, ASHR…PVQG, and DALS…KKKN. The segment covering 692-701 has biased composition (polar residues); sequence ITPSKIFSNK. Basic and acidic residues predominate over residues 702 to 711; it reads SRTESEKSTP. Residues 712–722 show a composition bias toward polar residues; it reads DRSQTTSPVQG. The region spanning 854–920 is the GRAM 2 domain; that stretch reads RHFQERFSFN…IDVDTCSKEK (67 aa). The segment covering 964–976 has biased composition (basic and acidic residues); the sequence is RESGNESSDDNKS. The interval 964 to 996 is disordered; sequence RESGNESSDDNKSAQHGKSGCFQKTPSSAETTK. Polar residues predominate over residues 985–996; the sequence is FQKTPSSAETTK. Residues Ser1057, Arg1058, Asp1060, Asn1333, Ile1364, His1366, His1379, Ser1382, Gly1383, Thr1384, Asp1403, and Gln1404 each contribute to the UDP-alpha-D-glucose site. The segment at 1505 to 1574 is disordered; the sequence is DSDTYDADHD…DNTTVTDANK (70 aa). The span at 1510–1533 shows a compositional bias: basic and acidic residues; that stretch reads DADHDSDKESDHDQTYEQDNHSDY. The segment covering 1563–1574 has biased composition (polar residues); it reads GNDNTTVTDANK.

It belongs to the glycosyltransferase 28 family.

The protein localises to the cytoplasm. Its subcellular location is the membrane. The catalysed reaction is a sterol + UDP-alpha-D-glucose = a sterol 3-beta-D-glucoside + UDP + H(+). It carries out the reaction ergosterol + UDP-alpha-D-glucose = ergosteryl 3-beta-D-glucoside + UDP + H(+). Its function is as follows. Sterol glycosyltransferase responsible for the glycosylation of ergosterol to form ergosterol-glucoside. The protein is Sterol 3-beta-glucosyltransferase of Debaryomyces hansenii (strain ATCC 36239 / CBS 767 / BCRC 21394 / JCM 1990 / NBRC 0083 / IGC 2968) (Yeast).